A 432-amino-acid polypeptide reads, in one-letter code: Adenylosuccinate synthetase 2 (432 aa).

GTP contacts are provided by residues 13-19 and 41-43; these read GDEGKGK and GHT. Aspartate 14 functions as the Proton acceptor in the catalytic mechanism. Mg(2+) is bound by residues aspartate 14 and glycine 41. IMP contacts are provided by residues 14 to 17, 39 to 42, threonine 130, arginine 144, glutamine 225, threonine 240, and arginine 304; these read DEGK and NAGH. Catalysis depends on histidine 42, which acts as the Proton donor. Position 300 to 306 (300 to 306) interacts with substrate; sequence ATTGRSR. GTP is bound by residues arginine 306, 332–334, and 415–417; these read KLD and STG.

The protein belongs to the adenylosuccinate synthetase family. Homodimer. Mg(2+) serves as cofactor.

Its subcellular location is the cytoplasm. It carries out the reaction IMP + L-aspartate + GTP = N(6)-(1,2-dicarboxyethyl)-AMP + GDP + phosphate + 2 H(+). It participates in purine metabolism; AMP biosynthesis via de novo pathway; AMP from IMP: step 1/2. Plays an important role in the de novo pathway of purine nucleotide biosynthesis. Catalyzes the first committed step in the biosynthesis of AMP from IMP. This chain is Adenylosuccinate synthetase 2, found in Photorhabdus laumondii subsp. laumondii (strain DSM 15139 / CIP 105565 / TT01) (Photorhabdus luminescens subsp. laumondii).